The primary structure comprises 266 residues: HLA class II histocompatibility antigen, DR beta 4 chain (266 aa).

A signal peptide spans 1–29 (MVCLKLPGGSCMAALTVTLTVLSSPLALA). The beta-1 stretch occupies residues 30–124 (GDTQPRFLEQ…VESFTVQRRV (95 aa)). Residues 30 to 227 (GDTQPRFLEQ…SARSESAQSK (198 aa)) lie on the Extracellular side of the membrane. Cystine bridges form between Cys44–Cys108 and Cys146–Cys202. Asn48 is a glycosylation site (N-linked (GlcNAc...) asparagine). The tract at residues 125 to 227 (QPKVTVYPSK…SARSESAQSK (103 aa)) is beta-2. Positions 126–216 (PKVTVYPSKT…PSMMSPLTVQ (91 aa)) constitute an Ig-like C1-type domain. Residues 228 to 250 (MLSGVGGFVLGLLFLGTGLFIYF) form a helical membrane-spanning segment. Residues 251–266 (RNQKGHSGLQPTGLLS) lie on the Cytoplasmic side of the membrane. Residue Lys254 forms a Glycyl lysine isopeptide (Lys-Gly) (interchain with G-Cter in ubiquitin) linkage.

This sequence belongs to the MHC class II family. In terms of assembly, heterodimer of an alpha and a beta subunit; also referred as MHC class II molecule. In the endoplasmic reticulum (ER) it forms a heterononamer; 3 MHC class II molecules bind to a CD74 homotrimer (also known as invariant chain or HLA class II histocompatibility antigen gamma chain). In the endosomal/lysosomal system; CD74 undergoes sequential degradation by various proteases; leaving a small fragment termed CLIP on each MHC class II molecule. MHC class II molecule interacts with HLA_DM, and HLA_DO in B-cells, in order to release CLIP and facilitate the binding of antigenic peptides. Post-translationally, ubiquitinated by MARCH1 and MARCH8 at Lys-254 leading to sorting into the endosome system and down-regulation of MHC class II. When associated with ubiquitination of the alpha subunit of HLA-DR: HLA-DRA 'Lys-244', the down-regulation of MHC class II may be highly effective.

It is found in the cell membrane. The protein localises to the endoplasmic reticulum membrane. It localises to the golgi apparatus. Its subcellular location is the trans-Golgi network membrane. The protein resides in the endosome membrane. It is found in the lysosome membrane. The protein localises to the late endosome membrane. Binds peptides derived from antigens that access the endocytic route of antigen presenting cells (APC) and presents them on the cell surface for recognition by the CD4 T-cells. The peptide binding cleft accommodates peptides of 10-30 residues. The peptides presented by MHC class II molecules are generated mostly by degradation of proteins that access the endocytic route, where they are processed by lysosomal proteases and other hydrolases. Exogenous antigens that have been endocytosed by the APC are thus readily available for presentation via MHC II molecules, and for this reason this antigen presentation pathway is usually referred to as exogenous. As membrane proteins on their way to degradation in lysosomes as part of their normal turn-over are also contained in the endosomal/lysosomal compartments, exogenous antigens must compete with those derived from endogenous components. Autophagy is also a source of endogenous peptides, autophagosomes constitutively fuse with MHC class II loading compartments. In addition to APCs, other cells of the gastrointestinal tract, such as epithelial cells, express MHC class II molecules and CD74 and act as APCs, which is an unusual trait of the GI tract. To produce a MHC class II molecule that presents an antigen, three MHC class II molecules (heterodimers of an alpha and a beta chain) associate with a CD74 trimer in the ER to form a heterononamer. Soon after the entry of this complex into the endosomal/lysosomal system where antigen processing occurs, CD74 undergoes a sequential degradation by various proteases, including CTSS and CTSL, leaving a small fragment termed CLIP (class-II-associated invariant chain peptide). The removal of CLIP is facilitated by HLA-DM via direct binding to the alpha-beta-CLIP complex so that CLIP is released. HLA-DM stabilizes MHC class II molecules until primary high affinity antigenic peptides are bound. The MHC II molecule bound to a peptide is then transported to the cell membrane surface. In B-cells, the interaction between HLA-DM and MHC class II molecules is regulated by HLA-DO. Primary dendritic cells (DCs) also to express HLA-DO. Lysosomal microenvironment has been implicated in the regulation of antigen loading into MHC II molecules, increased acidification produces increased proteolysis and efficient peptide loading. The chain is HLA class II histocompatibility antigen, DR beta 4 chain (HLA-DRB4) from Homo sapiens (Human).